Reading from the N-terminus, the 1002-residue chain is Lon protease homolog, mitochondrial (1002 aa).

The 212-residue stretch at 102 to 313 folds into the Lon N-terminal domain; sequence VIALPLPHRP…LTLELVKKEM (212 aa). An ATP-binding site is contributed by 468-475; it reads GPPGVGKT. One can recognise a Lon proteolytic domain in the interval 811–995; the sequence is QTPVGVVMGL…NEIFDIAFQS (185 aa). Residues serine 901 and lysine 944 contribute to the active site.

It belongs to the peptidase S16 family. As to quaternary structure, homohexamer or homoheptamer. Organized in a ring with a central cavity.

The protein resides in the mitochondrion matrix. The catalysed reaction is Hydrolysis of proteins in presence of ATP.. Functionally, ATP-dependent serine protease that mediates the selective degradation of misfolded, unassembled or oxidatively damaged polypeptides as well as certain short-lived regulatory proteins in the mitochondrial matrix. May also have a chaperone function in the assembly of inner membrane protein complexes. Participates in the regulation of mitochondrial gene expression and in the maintenance of the integrity of the mitochondrial genome. Binds to mitochondrial DNA in a site-specific manner. The chain is Lon protease homolog, mitochondrial from Oryza sativa subsp. japonica (Rice).